Consider the following 336-residue polypeptide: N-acetylornithine carbamoyltransferase (336 aa).

Carbamoyl phosphate is bound by residues 49-52 (SMRT), Trp77, and Arg112. Glu144 contributes to the N(2)-acetyl-L-ornithine binding site. 148-151 (HPCQ) is a binding site for carbamoyl phosphate. Lys252 and Leu295 together coordinate N(2)-acetyl-L-ornithine. 294–295 (CL) contributes to the carbamoyl phosphate binding site. Residue Lys302 is modified to N6-carboxylysine. Arg322 is a binding site for carbamoyl phosphate.

It belongs to the aspartate/ornithine carbamoyltransferase superfamily. AOTCase family. Homotrimer.

Its subcellular location is the cytoplasm. It catalyses the reaction N(2)-acetyl-L-ornithine + carbamoyl phosphate = N(2)-acetyl-L-citrulline + phosphate + H(+). It functions in the pathway amino-acid biosynthesis; L-arginine biosynthesis. Carboxylation at Lys-302 increases the catalytic activity of the enzyme. Its function is as follows. Catalyzes the transfer of the carbamoyl group from carbamoyl phosphate to the delta-amino group of N(2)-acetyl-L-ornithine to produce N(2)-acetyl-L-citrulline. This is a step in an alternative arginine biosynthesis pathway. The enzyme has no activity with ornithine. The chain is N-acetylornithine carbamoyltransferase from Xylella fastidiosa (strain Temecula1 / ATCC 700964).